The chain runs to 234 residues: Small ribosomal subunit protein uS3 (234 aa).

A KH type-2 domain is found at 39–107 (VRDYLKKKLS…PVHVNIEEVR (69 aa)). The interval 212–234 (EQPAAAEQEKRGKKSGVKHAAAS) is disordered.

It belongs to the universal ribosomal protein uS3 family. As to quaternary structure, part of the 30S ribosomal subunit. Forms a tight complex with proteins S10 and S14.

Functionally, binds the lower part of the 30S subunit head. Binds mRNA in the 70S ribosome, positioning it for translation. The polypeptide is Small ribosomal subunit protein uS3 (Thiobacillus denitrificans (strain ATCC 25259 / T1)).